We begin with the raw amino-acid sequence, 303 residues long: 2-dehydropantoate 2-reductase (303 aa).

NADP(+) contacts are provided by residues 7-12 (GCGALG), asparagine 98, and alanine 122. Position 98 (asparagine 98) interacts with substrate. Residue lysine 176 is the Proton donor of the active site. Residues asparagine 180, asparagine 184, asparagine 194, and serine 244 each coordinate substrate. Glutamate 256 contacts NADP(+).

The protein belongs to the ketopantoate reductase family. As to quaternary structure, monomer.

The protein localises to the cytoplasm. The catalysed reaction is (R)-pantoate + NADP(+) = 2-dehydropantoate + NADPH + H(+). The protein operates within cofactor biosynthesis; (R)-pantothenate biosynthesis; (R)-pantoate from 3-methyl-2-oxobutanoate: step 2/2. Catalyzes the NADPH-dependent reduction of ketopantoate into pantoic acid. In Salmonella typhi, this protein is 2-dehydropantoate 2-reductase (panE).